A 211-amino-acid polypeptide reads, in one-letter code: NADH-quinone oxidoreductase subunit I (211 aa).

Positions 21 to 41 are disordered; it reads PTTEQYPEQKKETAPRFHGRH. 2 consecutive 4Fe-4S ferredoxin-type domains span residues 43–73 and 89–118; these read LNRHPDGLEKCVGCELCAWACPADAIYVEGA and RVYQINYLRCILCGLCIEACPTRALTMSND. Residues C53, C56, C59, C63, C98, C101, C104, and C108 each coordinate [4Fe-4S] cluster. The tract at residues 141–211 is disordered; sequence RAGMESPPHP…AHGAGSERPR (71 aa). Residues 152 to 166 show a composition bias toward basic and acidic residues; sequence RLGESETDYYTRDPD. Positions 179 to 191 are enriched in acidic residues; the sequence is DEADEAGEAGEAG. A compositionally biased stretch (basic and acidic residues) spans 192–211; that stretch reads EAERAADKVPAHGAGSERPR.

Belongs to the complex I 23 kDa subunit family. As to quaternary structure, NDH-1 is composed of 14 different subunits. Subunits NuoA, H, J, K, L, M, N constitute the membrane sector of the complex. [4Fe-4S] cluster is required as a cofactor.

The protein resides in the cell membrane. The enzyme catalyses a quinone + NADH + 5 H(+)(in) = a quinol + NAD(+) + 4 H(+)(out). Functionally, NDH-1 shuttles electrons from NADH, via FMN and iron-sulfur (Fe-S) centers, to quinones in the respiratory chain. The immediate electron acceptor for the enzyme in this species is believed to be ubiquinone. Couples the redox reaction to proton translocation (for every two electrons transferred, four hydrogen ions are translocated across the cytoplasmic membrane), and thus conserves the redox energy in a proton gradient. The protein is NADH-quinone oxidoreductase subunit I of Parafrankia sp. (strain EAN1pec).